We begin with the raw amino-acid sequence, 424 residues long: Zona pellucida sperm-binding protein 3 (424 aa).

A signal peptide spans 1–22 (MGPSCLLFLCLLLCGGPELCYP). Glutamine 23 bears the Pyrrolidone carboxylic acid mark. Residues 23–387 (QTQWLLPGGT…EGWTSSAQTS (365 aa)) are Extracellular-facing. Residues threonine 32 and threonine 34 are each glycosylated (O-linked (GalNAc...) threonine). Residue serine 39 is glycosylated (O-linked (GalNAc...) serine). Residues 45-308 (ECKEAELVVT…KACSFNKTSQ (264 aa)) form the ZP domain. Cystine bridges form between cysteine 46-cysteine 139 and cysteine 78-cysteine 98. N-linked (GlcNAc...) asparagine glycosylation is present at asparagine 146. Threonine 155 and threonine 162 each carry an O-linked (GalNAc...) threonine glycan. Intrachain disulfides connect cysteine 216–cysteine 283 and cysteine 240–cysteine 301. N-linked (GlcNAc...) asparagine glycosylation is found at asparagine 273, asparagine 304, asparagine 327, and asparagine 330. A propeptide spans 352 to 424 (RRHVTDEADV…TSSYLVSLPQ (73 aa)) (removed in mature form). The helical transmembrane segment at 388–408 (VALGLGLATVAFLTLAAIVLG) threads the bilayer. The Cytoplasmic portion of the chain corresponds to 409-424 (VTRKCHTSSYLVSLPQ).

It belongs to the ZP domain family. ZPC subfamily. As to quaternary structure, polymers of ZP2 and ZP3 organized into long filaments cross-linked by ZP1 homodimers. Interacts with ZP1 and ZP2. Post-translationally, proteolytically cleaved before the transmembrane segment to yield the secreted ectodomain incorporated in the zona pellucida. N-glycosylated; N-linked glycans are of high mannose/hybrid type, as well as bi-, tri- and tetra-antennary complex types. In terms of processing, O-glycosylated; removal of O-linked glycans may play an important role in the post-fertilization block to polyspermy. As to expression, expressed in oocytes.

The protein resides in the zona pellucida. It localises to the cell membrane. Its function is as follows. Component of the zona pellucida, an extracellular matrix surrounding oocytes which mediates sperm binding, induction of the acrosome reaction and prevents post-fertilization polyspermy. The zona pellucida is composed of 3 to 4 glycoproteins, ZP1, ZP2, ZP3, and ZP4. ZP3 is essential for sperm binding and zona matrix formation. This is Zona pellucida sperm-binding protein 3 (Zp3) from Rattus norvegicus (Rat).